The sequence spans 324 residues: Thiazole synthase (324 aa).

Lysine 167 functions as the Schiff-base intermediate with DXP in the catalytic mechanism. Residues glycine 228, 254–255, and 276–277 contribute to the 1-deoxy-D-xylulose 5-phosphate site; these read AG and NT.

This sequence belongs to the ThiG family. In terms of assembly, homotetramer. Forms heterodimers with either ThiH or ThiS.

Its subcellular location is the cytoplasm. The catalysed reaction is [ThiS sulfur-carrier protein]-C-terminal-Gly-aminoethanethioate + 2-iminoacetate + 1-deoxy-D-xylulose 5-phosphate = [ThiS sulfur-carrier protein]-C-terminal Gly-Gly + 2-[(2R,5Z)-2-carboxy-4-methylthiazol-5(2H)-ylidene]ethyl phosphate + 2 H2O + H(+). The protein operates within cofactor biosynthesis; thiamine diphosphate biosynthesis. In terms of biological role, catalyzes the rearrangement of 1-deoxy-D-xylulose 5-phosphate (DXP) to produce the thiazole phosphate moiety of thiamine. Sulfur is provided by the thiocarboxylate moiety of the carrier protein ThiS. In vitro, sulfur can be provided by H(2)S. This is Thiazole synthase from Paramagnetospirillum magneticum (strain ATCC 700264 / AMB-1) (Magnetospirillum magneticum).